We begin with the raw amino-acid sequence, 335 residues long: E3 ubiquitin-protein ligase NLA (335 aa).

In terms of domain architecture, SPX spans 1 to 154; the sequence is MKFCKKYEEY…ESRQGQAFKT (154 aa). Residues 231–280 form an RING-type zinc finger; that stretch reads CSICLDTVFDPISLTCGHIYCYMCACSAASVNVVDGLKTAEATEKCPLCR.

As to quaternary structure, interacts with UBC8. Interacts with PHT1-1 and PHT1-4. Forms homodimers (via RING domain). Interacts with UBC24/PHO2. Interacts with NPF2.13/NRT1.7. Interacts with NAC92/ORE1. High expression in roots and stems, medium in seedlings, flowers, rosette and cauline leaves, and very low in siliques. Detected in cotyledons, hypocotyls, pedicel, receptacle, pistil, sepal, filament of stamen and at the two ends of developing siliques.

It is found in the nucleus speckle. The protein resides in the nucleus. It localises to the cell membrane. The enzyme catalyses S-ubiquitinyl-[E2 ubiquitin-conjugating enzyme]-L-cysteine + [acceptor protein]-L-lysine = [E2 ubiquitin-conjugating enzyme]-L-cysteine + N(6)-ubiquitinyl-[acceptor protein]-L-lysine.. The protein operates within protein modification; protein ubiquitination. Functionally, E3 ubiquitin-protein ligase that mediates E2-dependent protein ubiquitination. Plays a role in salicylic acid-mediated negative feedback regulation of salicylic acid (SA) accumulation. May be involved in the overall regulation of SA, benzoic acid and phenylpropanoid biosynthesis. Involved in defense response. May act as negative regulator of resistance to the necrotrophic fungal pathogen Plectosphaerella cucumerina by modulating the accumulation of the phytoalexin camalexin and the salicylic acid- and jasmonate- dependent defense pathways. Controls the adaptability to nitrogen limitation by channeling the phenylpropanoid metabolic flux to the induced anthocyanin synthesis. Involved in the regulation of inorganic phosphate (Pi) homeostasis in a nitrate-dependent fashion. Directs the ubiquitination and subsequent degradation of the plasma membrane-localized inorganic phosphate transporters PHT1-1 and PHT1-4, to maintain phosphate homeostasis. The ubiquitination of PHTs triggers their clathrin-dependent endocytosis and trafficking to the vacuole through the endosomal pathway for degradation. Functions cooperatively with UBC24/PHO2 to regulate the abundance of PHT1-1, PHT1-2 and PHT1-3 in different subcellular compartments. Regulates Pi homeostasis by mediating, cooperatively with UBC24/PHO2, polyubiquitination of PHT1-4 and its targeting for degradation. Directs the polyubiquitination and subsequent degradation of the plasma membrane-localized nitrate transporter NPF2.13/NRT1.7, to help plants to adapt to nitrogen deficiency by regulating the source-to-sink remobilization of nitrate. Regulates leaf senescence during nitrogen deficiency by mediating, cooperatively with UBC24/PHO2, polyubiquitination of NAC92/ORE1 and its targeting for degradation. The polypeptide is E3 ubiquitin-protein ligase NLA (Arabidopsis thaliana (Mouse-ear cress)).